A 750-amino-acid polypeptide reads, in one-letter code: Photosystem I P700 chlorophyll a apoprotein A1 (750 aa).

The next 8 membrane-spanning stretches (helical) occupy residues 70–93 (VFSAHFGQLAIIFIWLSGMYFHGA), 156–179 (LYSTAIGGLIFAALMLFAGWFHYH), 195–219 (LNHHLAGLLGLGSLSWAGHQVHVSL), 291–309 (TVHHHLAIAVLFLIAGHMY), 346–369 (WHAQLALNLAMLGSLTIVVAHHMY), 385–411 (LSLFTHHMWIGGFLVVGAAAHAAIFMV), 433–455 (AIVSHLNWACIFLGFHSFGLYIH), and 531–549 (FLVHHIHAFTIHVTVLILL). Residues Cys-573 and Cys-582 each contribute to the [4Fe-4S] cluster site. Transmembrane regions (helical) follow at residues 589–610 (HVFLGLFWMYNAISVVIFHFSW) and 664–686 (LSAYGLPFLGAHFVWAFSLMFLF). Residue His-675 coordinates chlorophyll a'. Residues Met-683 and Tyr-691 each coordinate chlorophyll a. Trp-692 contributes to the phylloquinone binding site. A helical transmembrane segment spans residues 724–744 (AVGVAHYLLGGIATTWAFFLA).

This sequence belongs to the PsaA/PsaB family. In terms of assembly, the PsaA/B heterodimer binds the P700 chlorophyll special pair and subsequent electron acceptors. PSI consists of a core antenna complex that captures photons, and an electron transfer chain that converts photonic excitation into a charge separation. The eukaryotic PSI reaction center is composed of at least 11 subunits. The cofactor is P700 is a chlorophyll a/chlorophyll a' dimer, A0 is one or more chlorophyll a, A1 is one or both phylloquinones and FX is a shared 4Fe-4S iron-sulfur center..

Its subcellular location is the plastid. The protein localises to the chloroplast thylakoid membrane. It catalyses the reaction reduced [plastocyanin] + hnu + oxidized [2Fe-2S]-[ferredoxin] = oxidized [plastocyanin] + reduced [2Fe-2S]-[ferredoxin]. Its function is as follows. PsaA and PsaB bind P700, the primary electron donor of photosystem I (PSI), as well as the electron acceptors A0, A1 and FX. PSI is a plastocyanin-ferredoxin oxidoreductase, converting photonic excitation into a charge separation, which transfers an electron from the donor P700 chlorophyll pair to the spectroscopically characterized acceptors A0, A1, FX, FA and FB in turn. Oxidized P700 is reduced on the lumenal side of the thylakoid membrane by plastocyanin. The chain is Photosystem I P700 chlorophyll a apoprotein A1 from Huperzia lucidula (Shining clubmoss).